A 257-amino-acid chain; its full sequence is tRNA pseudouridine synthase A (257 aa).

The active-site Nucleophile is the Asp-53. Tyr-111 is a substrate binding site.

The protein belongs to the tRNA pseudouridine synthase TruA family. As to quaternary structure, homodimer.

It carries out the reaction uridine(38/39/40) in tRNA = pseudouridine(38/39/40) in tRNA. Its function is as follows. Formation of pseudouridine at positions 38, 39 and 40 in the anticodon stem and loop of transfer RNAs. The protein is tRNA pseudouridine synthase A of Xylella fastidiosa (strain M23).